Reading from the N-terminus, the 190-residue chain is CD70 antigen (190 aa).

Residues 1–17 (MEEEGSGCNVPRLPWAS) are Cytoplasmic-facing. A helical transmembrane segment spans residues 18 to 38 (ILRAALLLLLIGMVIYCFLCG). Topologically, residues 39–190 (QRFTQQQLDS…TFFGVQLVRP (152 aa)) are extracellular. The THD domain maps to 52-188 (DLAELLLNHT…DETFFGVQLV (137 aa)). N-linked (GlcNAc...) asparagine glycans are attached at residues asparagine 59 and asparagine 110. Disulfide bonds link cysteine 111/cysteine 148 and cysteine 130/cysteine 165. N-linked (GlcNAc...) asparagine glycosylation is present at asparagine 167.

The protein belongs to the tumor necrosis factor family. Homotrimer. Post-translationally, N-glycosylated.

It localises to the cell membrane. In terms of biological role, expressed at the plasma membrane of B cells, it is the ligand of the CD27 receptor which is specifically expressed at the surface of T cells. The CD70-CD27 signaling pathway mediates antigen-specific T cell activation and expansion which in turn provides immune surveillance of B cells. The protein is CD70 antigen of Sus scrofa (Pig).